The primary structure comprises 334 residues: Photosystem II assembly protein Ycf48 (334 aa).

Positions 1 to 22 (MAKMLKLWRLVLLAAFSLLLMA) are cleaved as a signal peptide.

The protein belongs to the Ycf48 family. In terms of assembly, part of early PSII assembly complexes which includes D1 (psbA) and PsbI; not found in mature PSII. Binds to the lumenal side of PSII complexes. Interacts with YidC.

The protein resides in the cellular thylakoid lumen. Functionally, a factor required for optimal assembly of photosystem II (PSII), acting in the early stages of PSII assembly. Also plays a role in replacement of photodamaged D1 (psbA). Assists YidC in synthesis of chlorophyll-binding proteins. The sequence is that of Photosystem II assembly protein Ycf48 from Synechococcus sp. (strain JA-3-3Ab) (Cyanobacteria bacterium Yellowstone A-Prime).